Reading from the N-terminus, the 1231-residue chain is STE20-like serine/threonine-protein kinase (1231 aa).

Ser-14 bears the Phosphoserine mark. Residues 34–292 (WETIGELGDG…TSQLLQHPFV (259 aa)) enclose the Protein kinase domain. Residues 40 to 48 (LGDGAFGKV) and Lys-63 each bind ATP. The active-site Proton acceptor is Asp-155. Thr-183 carries the post-translational modification Phosphothreonine. A Phosphoserine modification is found at Ser-189. The interval 309–351 (AEVTEEVEDGKEEDDDEEIENSLPIPTNKRASSDLSIASSEED) is disordered. Acidic residues predominate over residues 312-328 (TEEVEDGKEEDDDEEIE). Residues Ser-330, Ser-340, Ser-341, Ser-344, Ser-347, Ser-348, Ser-354, and Ser-372 each carry the phosphoserine modification. A compositionally biased stretch (polar residues) spans 337–347 (KRASSDLSIAS). Residues 405–478 (PDRATELPES…KQPVLENKLV (74 aa)) are disordered. 2 stretches are compositionally biased toward basic and acidic residues: residues 407–428 (RATE…RLPD) and 446–478 (DHAV…NKLV). Ser-507 is modified (phosphoserine). Over residues 516-531 (THEKLRKDDTTQKDVI) the composition is skewed to basic and acidic residues. Residues 516–757 (THEKLRKDDT…TGSTADNSSI (242 aa)) form a disordered region. Ser-536 and Ser-554 each carry phosphoserine. Basic and acidic residues predominate over residues 601 to 613 (TDQKLVENTHEKQ). Residues 615 to 624 (PISSETTLDT) show a composition bias toward polar residues. 2 positions are modified to phosphoserine: Ser-641 and Ser-661. Residues 641–660 (STEEVEVEGAVSETDEEDVQ) are compositionally biased toward acidic residues. Residues 683–692 (EAPAQVEVQV) are compositionally biased toward low complexity. Residues 693 to 706 (PVPPQPSEPPPAPI) are compositionally biased toward pro residues. A Phosphoserine modification is found at Ser-775. Residue Thr-810 is modified to Phosphothreonine. Phosphoserine is present on Ser-814. Residues 822-1065 (LRRQELRELR…LKNRQTQERA (244 aa)) adopt a coiled-coil conformation. A UVR domain is found at 871 to 906 (DQEIENLEKQQKQTIERLEQEHTNRLRDEAKRIKGE). At Thr-1093 the chain carries Phosphothreonine. A coiled-coil region spans residues 1105–1179 (SAQEEKRQKN…ELKEWREKLR (75 aa)).

Belongs to the protein kinase superfamily. STE Ser/Thr protein kinase family. STE20 subfamily. Proteolytically cleaved by caspase-3. Post-translationally, autophosphorylated. Ubiquitously expressed.

The protein resides in the cytoplasm. The enzyme catalyses L-seryl-[protein] + ATP = O-phospho-L-seryl-[protein] + ADP + H(+). It catalyses the reaction L-threonyl-[protein] + ATP = O-phospho-L-threonyl-[protein] + ADP + H(+). Mediates apoptosis and actin stress fiber dissolution. The chain is STE20-like serine/threonine-protein kinase (SLK) from Cavia porcellus (Guinea pig).